A 407-amino-acid chain; its full sequence is tRNA N6-adenosine threonylcarbamoyltransferase, mitochondrial (407 aa).

A mitochondrion-targeting transit peptide spans methionine 1–arginine 30. A divalent metal cation contacts are provided by histidine 145 and histidine 149. Residues leucine 170–glycine 174, aspartate 203, alanine 217, glutamate 221, serine 328–asparagine 329, and serine 360 each bind substrate. Aspartate 361 contacts a divalent metal cation.

The protein belongs to the KAE1 / TsaD family. Homodimer. A divalent metal cation serves as cofactor.

Its subcellular location is the mitochondrion. It carries out the reaction L-threonylcarbamoyladenylate + adenosine(37) in tRNA = N(6)-L-threonylcarbamoyladenosine(37) in tRNA + AMP + H(+). In terms of biological role, required for the formation of a threonylcarbamoyl group on adenosine at position 37 (t(6)A37) in mitochondrial tRNAs that read codons beginning with adenine. Probably involved in the transfer of the threonylcarbamoyl moiety of threonylcarbamoyl-AMP (TC-AMP) to the N6 group of A37. Involved in mitochondrial genome maintenance. This Saccharomyces cerevisiae (strain ATCC 204508 / S288c) (Baker's yeast) protein is tRNA N6-adenosine threonylcarbamoyltransferase, mitochondrial (QRI7).